We begin with the raw amino-acid sequence, 290 residues long: 7-methylguanosine phosphate-specific 5'-nucleotidase B (290 aa).

The Nucleophile role is filled by Asp39. 2 residues coordinate Mg(2+): Asp39 and Asp41. The active-site Proton donor is the Asp41. Glu86 contributes to the CMP binding site. Glu86 lines the N(7)-methyl-GMP pocket. Residues 154–155 (SA) and Lys203 each bind substrate. Asp228 is a binding site for Mg(2+).

The protein belongs to the pyrimidine 5'-nucleotidase family. As to quaternary structure, monomer.

The protein localises to the cytoplasm. The enzyme catalyses N(7)-methyl-GMP + H2O = N(7)-methylguanosine + phosphate. It catalyses the reaction CMP + H2O = cytidine + phosphate. It carries out the reaction a ribonucleoside 5'-phosphate + H2O = a ribonucleoside + phosphate. Specifically hydrolyzes 7-methylguanosine monophosphate (m(7)GMP) to 7-methylguanosine and inorganic phosphate. The specific activity for m(7)GMP may protect cells against undesired salvage of m(7)GMP and its incorporation into nucleic acids. Also has weak activity for CMP. UMP and purine nucleotides are poor substrates. This Xenopus laevis (African clawed frog) protein is 7-methylguanosine phosphate-specific 5'-nucleotidase B (Nt5c3b-b).